The following is a 203-amino-acid chain: FMN-dependent NADH:quinone oxidoreductase (203 aa).

FMN is bound by residues serine 9, 15-17 (SVS), and 138-141 (SRGG).

Belongs to the azoreductase type 1 family. In terms of assembly, homodimer. The cofactor is FMN.

The catalysed reaction is 2 a quinone + NADH + H(+) = 2 a 1,4-benzosemiquinone + NAD(+). The enzyme catalyses N,N-dimethyl-1,4-phenylenediamine + anthranilate + 2 NAD(+) = 2-(4-dimethylaminophenyl)diazenylbenzoate + 2 NADH + 2 H(+). Functionally, quinone reductase that provides resistance to thiol-specific stress caused by electrophilic quinones. Its function is as follows. Also exhibits azoreductase activity. Catalyzes the reductive cleavage of the azo bond in aromatic azo compounds to the corresponding amines. The chain is FMN-dependent NADH:quinone oxidoreductase from Methylorubrum extorquens (strain CM4 / NCIMB 13688) (Methylobacterium extorquens).